We begin with the raw amino-acid sequence, 175 residues long: Large ribosomal subunit protein uL6 (175 aa).

The protein belongs to the universal ribosomal protein uL6 family. As to quaternary structure, part of the 50S ribosomal subunit.

Its function is as follows. This protein binds to the 23S rRNA, and is important in its secondary structure. It is located near the subunit interface in the base of the L7/L12 stalk, and near the tRNA binding site of the peptidyltransferase center. This is Large ribosomal subunit protein uL6 from Xanthomonas campestris pv. campestris (strain 8004).